We begin with the raw amino-acid sequence, 277 residues long: Ubiquinone biosynthesis protein COQ4, mitochondrial (277 aa).

The N-terminal 14 residues, 1–14 (MLTKRALRTTDPYR), are a transit peptide targeting the mitochondrion. Zn(2+) contacts are provided by H157, D158, H161, and E173.

This sequence belongs to the COQ4 family. As to quaternary structure, component of a multi-subunit COQ enzyme complex, composed of at least COQ3, COQ4, COQ5, COQ6, COQ7 and COQ9. Zn(2+) is required as a cofactor.

It localises to the mitochondrion inner membrane. The catalysed reaction is a 4-hydroxy-3-methoxy-5-(all-trans-polyprenyl)benzoate + H(+) = a 2-methoxy-6-(all-trans-polyprenyl)phenol + CO2. It functions in the pathway cofactor biosynthesis; ubiquinone biosynthesis. Its function is as follows. Lyase that catalyzes the C1-decarboxylation of 4-hydroxy-3-methoxy-5-(all-trans-polyprenyl)benzoic acid into 2-methoxy-6-(all-trans-polyprenyl)phenol during ubiquinone biosynthesis. The sequence is that of Ubiquinone biosynthesis protein COQ4, mitochondrial from Ajellomyces capsulatus (strain NAm1 / WU24) (Darling's disease fungus).